Here is a 1492-residue protein sequence, read N- to C-terminus: Condensin-2 complex subunit D3-L (1492 aa).

The segment at 152–201 (WPRDPNASRKRKKDTLKSSQGDNRGGRKRPRPPRRDEQEMEDLSEEEQDE) is disordered. A compositionally biased stretch (acidic residues) spans 189-201 (QEMEDLSEEEQDE). 3 HEAT repeats span residues 543 to 581 (SSDG…CHLI), 583 to 619 (CSSE…AQPH), and 621 to 659 (VLIQ…QSIT). 3 disordered regions span residues 1269–1345 (QLER…PRPR), 1359–1406 (RKAA…SLVG), and 1454–1492 (IMSP…KPSN). Positions 1277–1290 (NVQNPPSAESTGSP) are enriched in polar residues. A compositionally biased stretch (low complexity) spans 1377-1388 (PSTPSPARTTSS).

As to quaternary structure, component of the condensin-2 complex, which contains the smc2 and smc4 heterodimer, and three non SMC subunits, ncapg2, ncaph2 and ncapd3 that probably regulate the complex.

It is found in the nucleus. Its function is as follows. Regulatory subunit of the condensin-2 complex, a complex which establishes mitotic chromosome architecture and is involved in physical rigidity of the chromatid axis. This is Condensin-2 complex subunit D3-L from Xenopus laevis (African clawed frog).